The chain runs to 203 residues: Chromophore lyase CpcT/CpeT 3 (203 aa).

It belongs to the CpcT/CpeT biliprotein lyase family.

Functionally, covalently attaches a chromophore to Cys residue(s) of phycobiliproteins. This is Chromophore lyase CpcT/CpeT 3 from Gloeobacter violaceus (strain ATCC 29082 / PCC 7421).